Consider the following 642-residue polypeptide: Threonine--tRNA ligase (642 aa).

Residues 1 to 61 (MPVITLPDGS…ENDATLAIIT (61 aa)) form the TGS domain. The tract at residues 243 to 534 (DHRKIGKQLD…LTEEFAGFFP (292 aa)) is catalytic. Zn(2+) is bound by residues Cys-334, His-385, and His-511.

Belongs to the class-II aminoacyl-tRNA synthetase family. In terms of assembly, homodimer. The cofactor is Zn(2+).

The protein resides in the cytoplasm. The enzyme catalyses tRNA(Thr) + L-threonine + ATP = L-threonyl-tRNA(Thr) + AMP + diphosphate + H(+). Its function is as follows. Catalyzes the attachment of threonine to tRNA(Thr) in a two-step reaction: L-threonine is first activated by ATP to form Thr-AMP and then transferred to the acceptor end of tRNA(Thr). Also edits incorrectly charged L-seryl-tRNA(Thr). In Salmonella dublin (strain CT_02021853), this protein is Threonine--tRNA ligase.